Reading from the N-terminus, the 849-residue chain is Mechanosensitive ion channel protein 7 (849 aa).

Positions 1–49 (MEFRKPFKSHSSYKQIISTGDQNEKTKKKKKLANLDDGDIAKTQSSGSS) are disordered. A compositionally biased stretch (polar residues) spans 9 to 21 (SHSSYKQIISTGD). 6 consecutive transmembrane segments (helical) span residues 231-251 (AITL…VLSL), 274-294 (LVLI…VFFI), 313-333 (TAVQ…FLFD), 344-364 (VLLL…LWLI), 606-626 (MISF…LEIA), and 642-662 (AFMF…LFII).

The protein belongs to the MscS (TC 1.A.23) family.

The protein resides in the membrane. Mechanosensitive channel that opens in response to stretch forces in the membrane lipid bilayer. This chain is Mechanosensitive ion channel protein 7 (MSL7), found in Arabidopsis thaliana (Mouse-ear cress).